The following is a 1875-amino-acid chain: Protein MLP1 (1875 aa).

The residue at position 2 (Ser-2) is an N-acetylserine. 2 coiled-coil regions span residues 69–487 (ELKA…IQYL) and 531–1678 (ERLV…SAES). Thr-337 bears the Phosphothreonine mark. Ser-379 bears the Phosphoserine mark. The Required for nuclear localization signature appears at 1496-1565 (QPSNINMEEI…EEKVEERIKS (70 aa)). A disordered region spans residues 1641–1689 (KKSFDEGKQQAMMKTTLLERKLAKMESQLSETKQSAESPPKSVNNVQNP). A compositionally biased stretch (polar residues) spans 1667-1688 (SQLSETKQSAESPPKSVNNVQN). A phosphoserine mark is found at Ser-1670 and Ser-1710. The span at 1716 to 1725 (KLNSKSSSGG) shows a compositional bias: low complexity. Residues 1716-1875 (KLNSKSSSGG…TDKVNDENSI (160 aa)) form a disordered region. Residues 1728–1737 (PFTSPSPNKH) show a composition bias toward polar residues. Phosphoserine is present on Ser-1733. Positions 1738 to 1748 (LQNDNDKRESL) are enriched in basic and acidic residues. A compositionally biased stretch (polar residues) spans 1787-1801 (TSNNPAQKDSSNRNV). Ser-1803 carries the post-translational modification Phosphoserine. Composition is skewed to basic and acidic residues over residues 1807 to 1840 (TEKK…GELK) and 1865 to 1875 (ETDKVNDENSI). Residues 1834-1866 (DEVGELKNDEDDTTENINESKKIKTEDEEEKET) are a coiled coil.

In terms of assembly, component of the nuclear pore complex (NPC). NPC constitutes the exclusive means of nucleocytoplasmic transport. NPCs allow the passive diffusion of ions and small molecules and the active, nuclear transport receptor-mediated bidirectional transport of macromolecules such as proteins, RNAs, ribonucleoparticles (RNPs), and ribosomal subunits across the nuclear envelope. Due to its 8-fold rotational symmetry, all subunits are present with 8 copies or multiples thereof. Interacts with NAB2, a hnRNP required for mRNA export. Interacts with MLP2. In terms of processing, may be phosphorylated by CDC28.

The protein resides in the nucleus. It localises to the nuclear pore complex. Its function is as follows. Together with the closely related MLP2, involved in the structural and functional organization of perinuclear chromatin. Together with MLP2, associates with the nuclear pore complex and form filamentous structures along the nuclear periphery. Has a role in the localization of Esc1 to nucleolar regions. Together with MLP2, mediates tethering of the some telomeres to the nuclear periphery, probably mediated by YKU70/YKU80 (HDF1/HDF2) heterodimer and show perinuclear location dependent silencing. MLP1 and MLP2 are involved in telomere length regulation but not silencing or telomere anchoring. Recognizes the 5'-splice site of pre-mRNAs and retains unspliced pre-mRNA in the nucleus without affecting splicing itself. The protein is Protein MLP1 (MLP1) of Saccharomyces cerevisiae (strain ATCC 204508 / S288c) (Baker's yeast).